The chain runs to 919 residues: UPF0182 protein SUN_1015 (919 aa).

A run of 7 helical transmembrane segments spans residues Ile8–Tyr28, Ile51–Phe71, Ala102–Ala122, Val158–Leu178, Leu207–Leu227, Ile246–Tyr266, and Val274–Pro294.

Belongs to the UPF0182 family.

The protein resides in the cell membrane. This chain is UPF0182 protein SUN_1015, found in Sulfurovum sp. (strain NBC37-1).